We begin with the raw amino-acid sequence, 307 residues long: Aspartate carbamoyltransferase catalytic subunit (307 aa).

The carbamoyl phosphate site is built by Arg-59 and Thr-60. Lys-87 serves as a coordination point for L-aspartate. Residues Arg-109, His-137, and Gln-140 each coordinate carbamoyl phosphate. L-aspartate contacts are provided by Arg-173 and Arg-223. Carbamoyl phosphate-binding residues include Gly-266 and Pro-267.

It belongs to the aspartate/ornithine carbamoyltransferase superfamily. ATCase family. In terms of assembly, heterododecamer (2C3:3R2) of six catalytic PyrB chains organized as two trimers (C3), and six regulatory PyrI chains organized as three dimers (R2).

The enzyme catalyses carbamoyl phosphate + L-aspartate = N-carbamoyl-L-aspartate + phosphate + H(+). Its pathway is pyrimidine metabolism; UMP biosynthesis via de novo pathway; (S)-dihydroorotate from bicarbonate: step 2/3. Functionally, catalyzes the condensation of carbamoyl phosphate and aspartate to form carbamoyl aspartate and inorganic phosphate, the committed step in the de novo pyrimidine nucleotide biosynthesis pathway. The protein is Aspartate carbamoyltransferase catalytic subunit of Helicobacter pylori (strain ATCC 700392 / 26695) (Campylobacter pylori).